An 81-amino-acid chain; its full sequence is Probable antitoxin MazE2 (81 aa).

Forms a complex with cognate toxin MazF2.

In terms of biological role, antitoxin component of a type II toxin-antitoxin (TA) system. This Mycobacterium tuberculosis (strain ATCC 25618 / H37Rv) protein is Probable antitoxin MazE2 (mazE2).